The chain runs to 357 residues: Tribbles homolog 3 (357 aa).

Positions 1-63 (MRASPLAVPA…PAPVHAPDVT (63 aa)) are disordered. The tract at residues 1–127 (MRASPLAVPA…GHVARPAEVL (127 aa)) is interaction with DDIT3/CHOP. One can recognise a Protein kinase domain in the interval 68–316 (LGPYVLLEPE…SGILLHPWLR (249 aa)). Residues 333–357 (DQVVPEGPGLEEAEEEGERDMGLYG) are disordered. The span at 341–350 (GLEEAEEEGE) shows a compositional bias: acidic residues.

This sequence belongs to the protein kinase superfamily. CAMK Ser/Thr protein kinase family. Tribbles subfamily. Interacts with AKT1, AKT2, MAP2K1 and MAP2K7. Interacts with ATF4. Interacts with DDIT3/CHOP and inhibits its interaction with EP300/P300. Interacts with APOBEC3C. Interacts (via N-terminus) with APOBEC3A. Interacts with RELA.

The protein localises to the nucleus. Inactive protein kinase which acts as a regulator of the integrated stress response (ISR), a process for adaptation to various stress. Inhibits the transcriptional activity of DDIT3/CHOP and is involved in DDIT3/CHOP-dependent cell death during ER stress. May play a role in programmed neuronal cell death but does not appear to affect non-neuronal cells. Acts as a negative feedback regulator of the ATF4-dependent transcription during the ISR: while TRIB3 expression is promoted by ATF4, TRIB3 protein interacts with ATF4 and inhibits ATF4 transcription activity. Disrupts insulin signaling by binding directly to Akt kinases and blocking their activation. May bind directly to and mask the 'Thr-308' phosphorylation site in AKT1. Interacts with the NF-kappa-B transactivator p65 RELA and inhibits its phosphorylation and thus its transcriptional activation activity. Interacts with MAPK kinases and regulates activation of MAP kinases. Can inhibit APOBEC3A editing of nuclear DNA. In Bos taurus (Bovine), this protein is Tribbles homolog 3 (TRIB3).